The primary structure comprises 288 residues: ATP synthase gamma chain (288 aa).

This sequence belongs to the ATPase gamma chain family. As to quaternary structure, F-type ATPases have 2 components, CF(1) - the catalytic core - and CF(0) - the membrane proton channel. CF(1) has five subunits: alpha(3), beta(3), gamma(1), delta(1), epsilon(1). CF(0) has three main subunits: a, b and c.

It is found in the cell inner membrane. Functionally, produces ATP from ADP in the presence of a proton gradient across the membrane. The gamma chain is believed to be important in regulating ATPase activity and the flow of protons through the CF(0) complex. This Glaesserella parasuis serovar 5 (strain SH0165) (Haemophilus parasuis) protein is ATP synthase gamma chain.